The primary structure comprises 274 residues: Centriolar and ciliogenesis-associated protein hyls-1 (274 aa).

Disordered stretches follow at residues 156 to 188 (RSSV…SSRP) and 255 to 274 (NNED…PYID). Residues 171–183 (VGLSTETEQSELQ) are compositionally biased toward polar residues. Positions 257–274 (EDWKANHDKDWSPRPYID) are enriched in basic and acidic residues.

Belongs to the HYLS1 family. As to quaternary structure, interacts with sas-4; leading to its localization into newly forming centrioles.

The protein resides in the cytoplasm. The protein localises to the cytoskeleton. It localises to the microtubule organizing center. It is found in the centrosome. Its subcellular location is the centriole. The protein resides in the cell projection. The protein localises to the cilium. In terms of biological role, plays an important role in ciliogenesis. In Caenorhabditis elegans, this protein is Centriolar and ciliogenesis-associated protein hyls-1.